Consider the following 220-residue polypeptide: Claudin-6 (220 aa).

The Cytoplasmic portion of the chain corresponds to Met1–Gln7. A helical transmembrane segment spans residues Ile8–Pro28. At Met29–Arg81 the chain is on the extracellular side. A helical membrane pass occupies residues Ala82–Ala102. Topologically, residues Lys103–Arg116 are cytoplasmic. The helical transmembrane segment at Leu117–Cys137 threads the bilayer. The Extracellular segment spans residues Trp138 to Leu160. A helical transmembrane segment spans residues Gly161–Leu181. The Cytoplasmic segment spans residues Cys182 to Val220. Ser201, Ser203, Ser208, and Ser212 each carry phosphoserine. The segment at Tyr219–Val220 is interactions with TJP1, TJP2 and TJP3.

This sequence belongs to the claudin family. Directly interacts with TJP1/ZO-1, TJP2/ZO-2 and TJP3/ZO-3. Interacts with CLDN1, CD81 and OCLN. Expressed in the liver, in peripheral blood mononuclear cells and hepatocarcinoma cell lines.

The protein localises to the cell junction. The protein resides in the tight junction. Its subcellular location is the cell membrane. Its function is as follows. Plays a major role in tight junction-specific obliteration of the intercellular space. (Microbial infection) Acts as a receptor for hepatitis C virus (HCV) entry into hepatic cells. This Homo sapiens (Human) protein is Claudin-6 (CLDN6).